The primary structure comprises 210 residues: Ion-translocating oxidoreductase complex subunit G (210 aa).

The chain crosses the membrane as a helical span at residues 9-29; the sequence is SLVLALFAIAATALVTITYAL. FMN phosphoryl threonine is present on T176.

The protein belongs to the RnfG family. As to quaternary structure, the complex is composed of six subunits: RnfA, RnfB, RnfC, RnfD, RnfE and RnfG. The cofactor is FMN.

It is found in the cell inner membrane. Its function is as follows. Part of a membrane-bound complex that couples electron transfer with translocation of ions across the membrane. The polypeptide is Ion-translocating oxidoreductase complex subunit G (Aliivibrio fischeri (strain MJ11) (Vibrio fischeri)).